Here is a 332-residue protein sequence, read N- to C-terminus: MKNLRNRSFLTLLDFSTAEVEFLLKLSEDLKRAKYAGIEQQKLVGKNIALIFEKDSTRTRCAFEVAAHDQGAHVTYLGPTGSQMGKKETSKDTARVLGGMYDGIEYRGFSQETVETLAEFSGVPVWNGLTDADHPTQVLADFLTAKECLHKPYKDIRFTYVGDGRNNVANALMIGASIVGMTYHLVCPKELEPDPELLSKCQEIAKTTGASIEITADIAEGVRDSDVLYTDVWVSMGEPDEVWKERIALLEPYRITQEMLNMTENPNVIFEHCLPSFHNIDTKVGYDIYEKYGLKEMEVSDEVFEGPHSVVFQEAENRMHTIKAVMVATLGD.

Carbamoyl phosphate contacts are provided by residues 56 to 59, Gln83, Arg107, and 134 to 137; these read STRT and HPTQ. L-ornithine contacts are provided by residues Asn167, Asp231, and 235 to 236; that span reads SM. Carbamoyl phosphate-binding positions include 273 to 274 and Arg318; that span reads CL.

It belongs to the aspartate/ornithine carbamoyltransferase superfamily. OTCase family.

It localises to the cytoplasm. The enzyme catalyses carbamoyl phosphate + L-ornithine = L-citrulline + phosphate + H(+). It participates in amino-acid degradation; L-arginine degradation via ADI pathway; carbamoyl phosphate from L-arginine: step 2/2. Functionally, reversibly catalyzes the transfer of the carbamoyl group from carbamoyl phosphate (CP) to the N(epsilon) atom of ornithine (ORN) to produce L-citrulline. This is Ornithine carbamoyltransferase 1, catabolic (arcB1) from Streptococcus agalactiae serotype III (strain NEM316).